The following is a 95-amino-acid chain: YcgL domain-containing protein Sden_1630 (95 aa).

In terms of domain architecture, YcgL spans 1 to 85; the sequence is MICTVYKSRR…PKANLLEEHK (85 aa).

The sequence is that of YcgL domain-containing protein Sden_1630 from Shewanella denitrificans (strain OS217 / ATCC BAA-1090 / DSM 15013).